Here is a 391-residue protein sequence, read N- to C-terminus: uncharacterized protein (391 aa).

The next 11 helical transmembrane spans lie at 15–35 (LSFCVVFLLRMLGIFSVLPIL), 48–68 (FLIGLAVGIYGATQIVFQIPF), 81–101 (IIFGLFIFFIGSLIVVSTNSI), 139–159 (IIGVSFAVSFLISVVSAPIIA), 167–187 (IFWISAVFSIFSILIVFFLIP), 217–237 (FYLGVFLLHFLLTMNFLIIPY), 251–271 (IVYFATIVFSFFFLFLIVFYF), 275–295 (FFLKNIIEICIFFIFLSLLLF), 303–323 (ICLTFALQIFFIAFNILEIFF), 346–366 (TSQFLGIACGGVLNGLLCTFF), and 369–389 (NHIFLFEIFITLIWFIFSFFC).

This sequence belongs to the major facilitator superfamily.

It localises to the cell membrane. This is an uncharacterized protein from Buchnera aphidicola subsp. Schizaphis graminum (strain Sg).